A 263-amino-acid polypeptide reads, in one-letter code: Killer cell lectin-like receptor 4 (263 aa).

Topologically, residues 1–44 are cytoplasmic; that stretch reads MTEQEDTFSAVRFHKSSGLQNEMRLKETRKPEKARLRVCSVPWQ. Residues 45–65 form a helical; Signal-anchor for type II membrane protein membrane-spanning segment; it reads LIVIALGILISLRLVTVAVLM. At 66 to 263 the chain is on the extracellular side; sequence TNIFQYGQQK…CGKRLDKFPH (198 aa). Asn-87 and Asn-104 each carry an N-linked (GlcNAc...) asparagine glycan. Positions 139–258 constitute a C-type lectin domain; that stretch reads GVKVYWFCYG…SFICICGKRL (120 aa). Cystine bridges form between Cys-146–Cys-151, Cys-164–Cys-252, Cys-168–Cys-254, and Cys-233–Cys-246. Residues Asn-170 and Asn-222 are each glycosylated (N-linked (GlcNAc...) asparagine).

As to quaternary structure, homodimer; disulfide-linked. Interacts with the adapter protein TYROBP/DAP12; the interaction leads to natural killer cell activation.

The protein localises to the cell membrane. Functionally, receptor on natural killer (NK) cells for class I MHC. In Mus musculus (Mouse), this protein is Killer cell lectin-like receptor 4 (Klra4).